The sequence spans 247 residues: MSNLLLIIDSVSQKIRDRRKLEEFGQNPDEEIESSLKDVRQELQKLNEEQSRLEKNAQIPEYRVRESEAFLIRMQRRLESAEEEFEKQRRASSIPADGTSAFSANPQVASTNNKLTPLPSLQKTTSSSEGSDIEMEAMYPVDGNDPDPINVNVLAQMHQQMLNEQEESLGGIEASVQRQKRMGYAMNTELSEQNVLLDNMNNDADRIERRFDHAKNRLNKVSRKAKQYPRCFIILLLCALLLLVASI.

Residues 27–94 (NPDEEIESSL…FEKQRRASSI (68 aa)) adopt a coiled-coil conformation. The segment at 88 to 130 (QRRASSIPADGTSAFSANPQVASTNNKLTPLPSLQKTTSSSEG) is disordered. Residues 100 to 130 (SAFSANPQVASTNNKLTPLPSLQKTTSSSEG) are compositionally biased toward polar residues. In terms of domain architecture, t-SNARE coiled-coil homology spans 159-221 (QQMLNEQEES…DHAKNRLNKV (63 aa)).

It is found in the golgi apparatus membrane. The protein localises to the prevacuolar compartment membrane. In terms of biological role, involved in vesicle-mediated protein transport between the Golgi and the vacuole. The chain is Syntaxin-like protein fsv1 (fsv1) from Schizosaccharomyces pombe (strain 972 / ATCC 24843) (Fission yeast).